Reading from the N-terminus, the 312-residue chain is Tyrosine recombinase XerC (312 aa).

Positions 1–103 constitute a Core-binding (CB) domain; it reads MIASIYSFLD…SIKSFAHYCV (103 aa). Residues 124-306 form the Tyr recombinase domain; that stretch reads ELPSPMTYAQ…SVKLKKQTHQ (183 aa). Catalysis depends on residues Arg-164, Lys-188, His-258, Arg-261, and His-284. Tyr-293 serves as the catalytic O-(3'-phospho-DNA)-tyrosine intermediate.

Belongs to the 'phage' integrase family. XerC subfamily. As to quaternary structure, forms a cyclic heterotetrameric complex composed of two molecules of XerC and two molecules of XerD.

The protein localises to the cytoplasm. In terms of biological role, site-specific tyrosine recombinase, which acts by catalyzing the cutting and rejoining of the recombining DNA molecules. The XerC-XerD complex is essential to convert dimers of the bacterial chromosome into monomers to permit their segregation at cell division. It also contributes to the segregational stability of plasmids. The chain is Tyrosine recombinase XerC from Chlamydia pneumoniae (Chlamydophila pneumoniae).